The sequence spans 274 residues: Ribosome biogenesis protein UTP30 (274 aa).

Belongs to the universal ribosomal protein uL1 family. Highly divergent. In terms of assembly, component of the 90S pre-ribosomes. Interacts with FAF1.

Its subcellular location is the nucleus. The protein localises to the nucleolus. Its function is as follows. Involved in rRNA-processing and ribosome biosynthesis. This chain is Ribosome biogenesis protein UTP30 (UTP30), found in Saccharomyces cerevisiae (strain ATCC 204508 / S288c) (Baker's yeast).